The following is a 488-amino-acid chain: ATP synthase subunit beta (488 aa).

Gly164–Thr171 is a binding site for ATP.

This sequence belongs to the ATPase alpha/beta chains family. F-type ATPases have 2 components, CF(1) - the catalytic core - and CF(0) - the membrane proton channel. CF(1) has five subunits: alpha(3), beta(3), gamma(1), delta(1), epsilon(1). CF(0) has four main subunits: a(1), b(1), b'(1) and c(9-12).

It is found in the cellular thylakoid membrane. It catalyses the reaction ATP + H2O + 4 H(+)(in) = ADP + phosphate + 5 H(+)(out). Its function is as follows. Produces ATP from ADP in the presence of a proton gradient across the membrane. The catalytic sites are hosted primarily by the beta subunits. The protein is ATP synthase subunit beta of Prochlorococcus marinus (strain MIT 9313).